The chain runs to 383 residues: Acetylornithine deacetylase (383 aa).

Position 80 (His-80) interacts with Zn(2+). Asp-82 is a catalytic residue. Zn(2+) is bound at residue Asp-112. The active site involves Glu-144. 3 residues coordinate Zn(2+): Glu-145, Glu-169, and His-355.

It belongs to the peptidase M20A family. ArgE subfamily. Homodimer. Zn(2+) is required as a cofactor. The cofactor is Co(2+). Glutathione serves as cofactor.

It is found in the cytoplasm. The enzyme catalyses N(2)-acetyl-L-ornithine + H2O = L-ornithine + acetate. It participates in amino-acid biosynthesis; L-arginine biosynthesis; L-ornithine from N(2)-acetyl-L-ornithine (linear): step 1/1. Functionally, catalyzes the hydrolysis of the amide bond of N(2)-acetylated L-amino acids. Cleaves the acetyl group from N-acetyl-L-ornithine to form L-ornithine, an intermediate in L-arginine biosynthesis pathway, and a branchpoint in the synthesis of polyamines. The polypeptide is Acetylornithine deacetylase (Shigella boydii serotype 4 (strain Sb227)).